The sequence spans 205 residues: Inosine triphosphate pyrophosphatase (205 aa).

An ITP-binding site is contributed by 20–25 (TGNAKK). Glu-48 provides a ligand contact to Mg(2+). ITP-binding positions include Lys-60, 76–77 (DT), Lys-93, 152–155 (FGWD), Lys-175, and 180–181 (HR).

It belongs to the HAM1 NTPase family. As to quaternary structure, homodimer. It depends on Mg(2+) as a cofactor. The cofactor is Mn(2+).

The protein localises to the cytoplasm. It catalyses the reaction ITP + H2O = IMP + diphosphate + H(+). The catalysed reaction is dITP + H2O = dIMP + diphosphate + H(+). It carries out the reaction XTP + H2O = XMP + diphosphate + H(+). Functionally, pyrophosphatase that hydrolyzes non-canonical purine nucleotides such as inosine triphosphate (ITP), deoxyinosine triphosphate (dITP) or xanthosine 5'-triphosphate (XTP) to their respective monophosphate derivatives. The enzyme does not distinguish between the deoxy- and ribose forms. Probably excludes non-canonical purines from RNA and DNA precursor pools, thus preventing their incorporation into RNA and DNA and avoiding chromosomal lesions. The sequence is that of Inosine triphosphate pyrophosphatase from Oryza sativa subsp. japonica (Rice).